The primary structure comprises 300 residues: Transcription elongation factor A protein 2 (300 aa).

Residues 6-83 enclose the TFIIS N-terminal domain; that stretch reads EEIARIARRL…KSWKKLLDAS (78 aa). Residue K58 forms a Glycyl lysine isopeptide (Lys-Gly) (interchain with G-Cter in ubiquitin) linkage. A phosphoserine mark is found at S60 and S101. The tract at residues 84-131 is disordered; the sequence is DAKARERRRGGSLPTSSSKEASEAQDPSRKRPELPRMPSTPRITTFPP. The segment covering 103–117 has biased composition (basic and acidic residues); that stretch reads EASEAQDPSRKRPEL. Residues 139–255 enclose the TFIIS central domain; the sequence is VRTKCREMLT…EHQMARTGGT (117 aa). Residues 258–298 form a TFIIS-type zinc finger; sequence DLFTCGKCRKKNCTYTQVQTRSSDEPMTTFVVCNECGNRWK. C262, C265, C290, and C293 together coordinate Zn(2+).

The protein belongs to the TFS-II family. Interacts with the basal transcription factor GTF2B. Interacts with REXO1.

The protein resides in the nucleus. In terms of biological role, necessary for efficient RNA polymerase II transcription elongation past template-encoded arresting sites. The arresting sites in DNA have the property of trapping a certain fraction of elongating RNA polymerases that pass through, resulting in locked ternary complexes. Cleavage of the nascent transcript by S-II allows the resumption of elongation from the new 3'-terminus. The sequence is that of Transcription elongation factor A protein 2 (TCEA2) from Bos taurus (Bovine).